Consider the following 697-residue polypeptide: Elongation factor G (697 aa).

One can recognise a tr-type G domain in the interval 6 to 281 (ENIRNIGICA…AVVDYLPSPI (276 aa)). GTP is bound by residues 15 to 22 (AHIDAGKT), 79 to 83 (DTPGH), and 133 to 136 (NKMD).

The protein belongs to the TRAFAC class translation factor GTPase superfamily. Classic translation factor GTPase family. EF-G/EF-2 subfamily.

The protein localises to the cytoplasm. Its function is as follows. Catalyzes the GTP-dependent ribosomal translocation step during translation elongation. During this step, the ribosome changes from the pre-translocational (PRE) to the post-translocational (POST) state as the newly formed A-site-bound peptidyl-tRNA and P-site-bound deacylated tRNA move to the P and E sites, respectively. Catalyzes the coordinated movement of the two tRNA molecules, the mRNA and conformational changes in the ribosome. The sequence is that of Elongation factor G from Rickettsia bellii (strain OSU 85-389).